Here is a 354-residue protein sequence, read N- to C-terminus: Putrescine/cadaverine-binding protein (354 aa).

A signal peptide spans Met1–Ala20.

It belongs to the bacterial solute-binding protein 1 family.

Its subcellular location is the periplasm. Functionally, binds putrescine and cadaverine. This Pseudomonas aeruginosa (strain ATCC 15692 / DSM 22644 / CIP 104116 / JCM 14847 / LMG 12228 / 1C / PRS 101 / PAO1) protein is Putrescine/cadaverine-binding protein.